The sequence spans 258 residues: UPF0246 protein VP0504 (258 aa).

It belongs to the UPF0246 family.

This Vibrio parahaemolyticus serotype O3:K6 (strain RIMD 2210633) protein is UPF0246 protein VP0504.